We begin with the raw amino-acid sequence, 354 residues long: MTIDAALADKIRRTPKAELHVHIEGTLEPERIFRLAQRNNVKLAYPDVEALRAAYAFTDLQSFLDIYYAGASVLLTEEDFFDMTMDYVKRAAADNVRHAEIFFDPQTHTARGVPMGTVIDGIADALAQARTEYDFSSSMILCFLRHLSEEDALATLEAALPYRDRFVGVGLDSSERGNPPEKFARVFARAKELGLHLVAHAGEEGPPQYVTDALDILKVERIDHGVRAIEDEALVQRLARERVALTVCPLSNQKLMVHPDLRDHPMKRLLDAGVAVTLHSDDPAYFGGYMNANWEASFDALPLDAADAHKLARNSFEAAFLPDVQKAEFLAEVDHFWSATPASPPATANVTTTT.

The Zn(2+) site is built by histidine 20, histidine 22, and histidine 200. Glutamate 203 serves as the catalytic Proton donor. Residue aspartate 281 coordinates Zn(2+). A substrate-binding site is contributed by aspartate 282.

It belongs to the metallo-dependent hydrolases superfamily. Adenosine and AMP deaminases family. Adenine deaminase type 2 subfamily. The cofactor is Zn(2+).

The enzyme catalyses adenine + H2O + H(+) = hypoxanthine + NH4(+). Functionally, catalyzes the hydrolytic deamination of adenine to hypoxanthine. Plays an important role in the purine salvage pathway and in nitrogen catabolism. This Cupriavidus metallidurans (strain ATCC 43123 / DSM 2839 / NBRC 102507 / CH34) (Ralstonia metallidurans) protein is Adenine deaminase.